The primary structure comprises 294 residues: MASMNTHKPDWLRVKAPQHERIGYVADLLSDLNLNTVCQEASCPNIGECFAGGTATFLIMGPGCTRACPYCDIDFDKSVRSLDPSEPERLGEAVKRLGLKHVVITSVNRDDLEDGGASQFVSCIDAVRASSVETTIELLIPDFCGNWDAFKKVMNASPNVLNHNIETVPRLYKRARPQGLYKRSLELLRRVRQESPNVYSKSGLMVGLGETDDEVLQVLSDLHDNNVDIVTIGQYLSPGTKHLPVDRFVTPDQFQKYKEEGQTRFGFLQVVSSPLTRSSYHAGEVKRLMQIYPR.

Positions 38, 43, 49, 64, 68, 71, and 279 each coordinate [4Fe-4S] cluster. A Radical SAM core domain is found at 50-268; it reads FAGGTATFLI…EEGQTRFGFL (219 aa).

The protein belongs to the radical SAM superfamily. Lipoyl synthase family. Requires [4Fe-4S] cluster as cofactor.

The protein localises to the cytoplasm. The catalysed reaction is [[Fe-S] cluster scaffold protein carrying a second [4Fe-4S](2+) cluster] + N(6)-octanoyl-L-lysyl-[protein] + 2 oxidized [2Fe-2S]-[ferredoxin] + 2 S-adenosyl-L-methionine + 4 H(+) = [[Fe-S] cluster scaffold protein] + N(6)-[(R)-dihydrolipoyl]-L-lysyl-[protein] + 4 Fe(3+) + 2 hydrogen sulfide + 2 5'-deoxyadenosine + 2 L-methionine + 2 reduced [2Fe-2S]-[ferredoxin]. It functions in the pathway protein modification; protein lipoylation via endogenous pathway; protein N(6)-(lipoyl)lysine from octanoyl-[acyl-carrier-protein]: step 2/2. Functionally, catalyzes the radical-mediated insertion of two sulfur atoms into the C-6 and C-8 positions of the octanoyl moiety bound to the lipoyl domains of lipoate-dependent enzymes, thereby converting the octanoylated domains into lipoylated derivatives. This Prochlorococcus marinus (strain SARG / CCMP1375 / SS120) protein is Lipoyl synthase 1.